A 125-amino-acid polypeptide reads, in one-letter code: MPGKHVSRVRALYRRILLLHRALPPDLKALGDQYVKDEFRRHKTVGPGEAQRFLKEWETYAAVLWQQAEDSRQSSTGKACFGTSLPEEKLNDFRDEQIGQLQELMQEATKPNRQFSITESTKPQL.

The N-terminal 30 residues, 1–30 (MPGKHVSRVRALYRRILLLHRALPPDLKAL), are a transit peptide targeting the mitochondrion.

This sequence belongs to the complex I LYR family. SDHAF3 subfamily. As to quaternary structure, interacts with Sdhb within an Sdha-Sdhb subcomplex.

It is found in the mitochondrion matrix. Its function is as follows. Plays an essential role in the assembly of succinate dehydrogenase (SDH), an enzyme complex (also referred to as respiratory complex II) that is a component of both the tricarboxylic acid (TCA) cycle and the mitochondrial electron transport chain, and which couples the oxidation of succinate to fumarate with the reduction of ubiquinone (coenzyme Q) to ubiquinol. Promotes maturation of the iron-sulfur protein subunit Sdhb of the SDH catalytic dimer, protecting it from the deleterious effects of oxidants. May act together with SDHAF1. The protein is Succinate dehydrogenase assembly factor 3, mitochondrial of Mus musculus (Mouse).